The chain runs to 122 residues: Big defensin (122 aa).

An N-terminal signal peptide occupies residues 1–28 (MTRPSLVRCYSLFFTALIVMAIICPAWS). A propeptide spanning residues 29–34 (EEIPKS) is cleaved from the precursor. 3 cysteine pairs are disulfide-bonded: C88/C119, C95/C114, and C99/C120.

It belongs to the big defensin family. In terms of tissue distribution, expressed in hemocytes.

It localises to the secreted. In terms of biological role, significantly inhibits the growth of Gram-negative and Gram-positive bacteria and fungi in vitro. This chain is Big defensin, found in Argopecten irradians (Bay scallop).